The chain runs to 588 residues: Aspartate--tRNA ligase (588 aa).

Glu171 is a binding site for L-aspartate. The segment at 195 to 198 (QLFK) is aspartate. Arg217 contributes to the L-aspartate binding site. Residues 217–219 (RDE) and Gln226 each bind ATP. Residue His447 participates in L-aspartate binding. Glu481 lines the ATP pocket. Residue Arg488 participates in L-aspartate binding. Position 533-536 (533-536 (GLDR)) interacts with ATP.

This sequence belongs to the class-II aminoacyl-tRNA synthetase family. Type 1 subfamily. As to quaternary structure, homodimer.

It localises to the cytoplasm. The enzyme catalyses tRNA(Asp) + L-aspartate + ATP = L-aspartyl-tRNA(Asp) + AMP + diphosphate. In terms of biological role, catalyzes the attachment of L-aspartate to tRNA(Asp) in a two-step reaction: L-aspartate is first activated by ATP to form Asp-AMP and then transferred to the acceptor end of tRNA(Asp). The polypeptide is Aspartate--tRNA ligase (Aeromonas salmonicida (strain A449)).